The sequence spans 514 residues: 2,3-bisphosphoglycerate-independent phosphoglycerate mutase (514 aa).

Mn(2+) is bound by residues aspartate 14 and serine 64. Catalysis depends on serine 64, which acts as the Phosphoserine intermediate. Substrate-binding positions include histidine 125, 155–156, arginine 187, arginine 193, 263–266, and lysine 336; these read RD and RADR. Mn(2+)-binding residues include aspartate 403, histidine 407, aspartate 444, histidine 445, and histidine 463.

It belongs to the BPG-independent phosphoglycerate mutase family. Monomer. The cofactor is Mn(2+).

It carries out the reaction (2R)-2-phosphoglycerate = (2R)-3-phosphoglycerate. It participates in carbohydrate degradation; glycolysis; pyruvate from D-glyceraldehyde 3-phosphate: step 3/5. In terms of biological role, catalyzes the interconversion of 2-phosphoglycerate and 3-phosphoglycerate. In Salmonella typhi, this protein is 2,3-bisphosphoglycerate-independent phosphoglycerate mutase.